We begin with the raw amino-acid sequence, 388 residues long: Formate-dependent phosphoribosylglycinamide formyltransferase (388 aa).

Residues 15–16 (EL) and glutamate 75 each bind N(1)-(5-phospho-beta-D-ribosyl)glycinamide. ATP is bound by residues arginine 107, lysine 148, 153–158 (SSGKGQ), 188–191 (EEFL), and glutamate 196. Positions 112-302 (DLASAELALL…EFELHLRAVL (191 aa)) constitute an ATP-grasp domain. Positions 261 and 273 each coordinate Mg(2+). N(1)-(5-phospho-beta-D-ribosyl)glycinamide is bound by residues aspartate 280, lysine 350, and 357-358 (RR).

The protein belongs to the PurK/PurT family. Homodimer.

The catalysed reaction is N(1)-(5-phospho-beta-D-ribosyl)glycinamide + formate + ATP = N(2)-formyl-N(1)-(5-phospho-beta-D-ribosyl)glycinamide + ADP + phosphate + H(+). It functions in the pathway purine metabolism; IMP biosynthesis via de novo pathway; N(2)-formyl-N(1)-(5-phospho-D-ribosyl)glycinamide from N(1)-(5-phospho-D-ribosyl)glycinamide (formate route): step 1/1. In terms of biological role, involved in the de novo purine biosynthesis. Catalyzes the transfer of formate to 5-phospho-ribosyl-glycinamide (GAR), producing 5-phospho-ribosyl-N-formylglycinamide (FGAR). Formate is provided by PurU via hydrolysis of 10-formyl-tetrahydrofolate. The protein is Formate-dependent phosphoribosylglycinamide formyltransferase of Prochlorococcus marinus (strain MIT 9313).